Here is a 74-residue protein sequence, read N- to C-terminus: Cecropin-P3 (74 aa).

The first 13 residues, 1–13 (MFLIYLLVQTAES), serve as a signal peptide directing secretion. The propeptide at 45–74 (RRRSVGEEDAIPSHIEVNKFFLRKPAKEHI) is removed in mature form.

Belongs to the cecropin family. In terms of tissue distribution, expressed in the body wall, intestine, uterus and ovary.

Its subcellular location is the secreted. In terms of biological role, has antibacterial activity against several Gram-positive and Gram-negative bacteria. Is weakly active against yeasts. Acts by a nonpore mechanism. In Ascaris suum (Pig roundworm), this protein is Cecropin-P3 (ASCEC-3).